Here is a 267-residue protein sequence, read N- to C-terminus: Type III pantothenate kinase (267 aa).

Residue 6–13 (DVRNTHTT) participates in ATP binding. Residue 109–112 (GADR) coordinates substrate. Residue aspartate 111 is the Proton acceptor of the active site. Aspartate 131 contributes to the K(+) binding site. ATP is bound at residue serine 134. Position 186 (threonine 186) interacts with substrate.

It belongs to the type III pantothenate kinase family. In terms of assembly, homodimer. NH4(+) is required as a cofactor. Requires K(+) as cofactor.

It is found in the cytoplasm. The enzyme catalyses (R)-pantothenate + ATP = (R)-4'-phosphopantothenate + ADP + H(+). It functions in the pathway cofactor biosynthesis; coenzyme A biosynthesis; CoA from (R)-pantothenate: step 1/5. Its function is as follows. Catalyzes the phosphorylation of pantothenate (Pan), the first step in CoA biosynthesis. This Mycobacterium sp. (strain JLS) protein is Type III pantothenate kinase.